A 73-amino-acid polypeptide reads, in one-letter code: Acyl carrier protein homolog (73 aa).

The Carrier domain occupies 1–72 (MAIKEWIITQ…DIIVLIEQKS (72 aa)). O-(pantetheine 4'-phosphoryl)serine is present on Ser32.

In terms of processing, 4'-phosphopantetheine is transferred from CoA to a specific serine of the apo-ACP-like protein.

It functions in the pathway lipid metabolism; fatty acid biosynthesis. Its function is as follows. Carrier of the growing fatty acid chain in fatty acid biosynthesis. In Mycoplasmopsis pulmonis (strain UAB CTIP) (Mycoplasma pulmonis), this protein is Acyl carrier protein homolog.